A 310-amino-acid chain; its full sequence is tRNA pseudouridine synthase B (310 aa).

Asp-47 (nucleophile) is an active-site residue.

This sequence belongs to the pseudouridine synthase TruB family. Type 1 subfamily.

The catalysed reaction is uridine(55) in tRNA = pseudouridine(55) in tRNA. Its function is as follows. Responsible for synthesis of pseudouridine from uracil-55 in the psi GC loop of transfer RNAs. The polypeptide is tRNA pseudouridine synthase B (Psychromonas ingrahamii (strain DSM 17664 / CCUG 51855 / 37)).